Here is a 115-residue protein sequence, read N- to C-terminus: Large ribosomal subunit protein uL24 (115 aa).

The tract at residues 49 to 68 is disordered; that stretch reads NMKTKHHPPSKDQEKGSITK.

It belongs to the universal ribosomal protein uL24 family. As to quaternary structure, part of the 50S ribosomal subunit.

Functionally, one of two assembly initiator proteins, it binds directly to the 5'-end of the 23S rRNA, where it nucleates assembly of the 50S subunit. One of the proteins that surrounds the polypeptide exit tunnel on the outside of the subunit. In Phytoplasma australiense, this protein is Large ribosomal subunit protein uL24.